The sequence spans 185 residues: Elongation factor P (185 aa).

Belongs to the elongation factor P family.

It localises to the cytoplasm. It functions in the pathway protein biosynthesis; polypeptide chain elongation. Functionally, involved in peptide bond synthesis. Stimulates efficient translation and peptide-bond synthesis on native or reconstituted 70S ribosomes in vitro. Probably functions indirectly by altering the affinity of the ribosome for aminoacyl-tRNA, thus increasing their reactivity as acceptors for peptidyl transferase. The polypeptide is Elongation factor P (Deinococcus deserti (strain DSM 17065 / CIP 109153 / LMG 22923 / VCD115)).